Here is a 193-residue protein sequence, read N- to C-terminus: Acyl carrier protein phosphodiesterase (193 aa).

Belongs to the AcpH family.

The catalysed reaction is holo-[ACP] + H2O = apo-[ACP] + (R)-4'-phosphopantetheine + H(+). Functionally, converts holo-ACP to apo-ACP by hydrolytic cleavage of the phosphopantetheine prosthetic group from ACP. The sequence is that of Acyl carrier protein phosphodiesterase from Serratia proteamaculans (strain 568).